The following is a 146-amino-acid chain: Late protein OPG112 (146 aa).

Residues 10-32 form a helical membrane-spanning segment; the sequence is LAMTAFFGELSTLDIMALIMSIF.

It belongs to the orthopoxvirus OPG112 family.

The protein resides in the host membrane. It is found in the host cytoplasm. In terms of biological role, contributes to the formation of crescents and immature virions (IV). Interacts with phosphatidylinositol-3-phosphate (PI3P) and phosphatidylinositol-4-phosphate (PI4P) lipids in order to form virion membranes. Mechanistically, mediates proper formation of OPG125-hexamers, and hence the honey comb lattice and spherical immature virus. The polypeptide is Late protein OPG112 (OPG112) (Bos taurus (Bovine)).